Reading from the N-terminus, the 952-residue chain is Isoleucine--tRNA ligase (952 aa).

The 'HIGH' region signature appears at 58 to 68; sequence PYANGDIHIGH. Glutamate 576 contacts L-isoleucyl-5'-AMP. The short motif at 617–621 is the 'KMSKS' region element; sequence KMSKS. Lysine 620 is an ATP binding site. The Zn(2+) site is built by cysteine 915, cysteine 918, cysteine 935, and cysteine 938.

The protein belongs to the class-I aminoacyl-tRNA synthetase family. IleS type 1 subfamily. As to quaternary structure, monomer. Zn(2+) is required as a cofactor.

It localises to the cytoplasm. It catalyses the reaction tRNA(Ile) + L-isoleucine + ATP = L-isoleucyl-tRNA(Ile) + AMP + diphosphate. Catalyzes the attachment of isoleucine to tRNA(Ile). As IleRS can inadvertently accommodate and process structurally similar amino acids such as valine, to avoid such errors it has two additional distinct tRNA(Ile)-dependent editing activities. One activity is designated as 'pretransfer' editing and involves the hydrolysis of activated Val-AMP. The other activity is designated 'posttransfer' editing and involves deacylation of mischarged Val-tRNA(Ile). The chain is Isoleucine--tRNA ligase from Aliivibrio fischeri (strain MJ11) (Vibrio fischeri).